We begin with the raw amino-acid sequence, 488 residues long: Teichuronic acid biosynthesis protein TuaE (488 aa).

14 helical membrane-spanning segments follow: residues 7-29 (AVHT…GAIH), 35-57 (MQMA…ATAF), 64-86 (FMAV…AIHL), 91-110 (LFLY…FGMV), 122-144 (LQVK…SLLW), 154-173 (YLAL…MYVQ), 180-202 (IVYA…NHIT), 222-244 (PTSV…FFYI), 257-274 (AIGL…FATG), 279-298 (LLGI…PPVL), 303-322 (IWLS…SKIY), 354-376 (NAWH…SYYL), 397-419 (ILAN…LIWV), and 459-476 (LFFH…VNVL).

The protein resides in the cell membrane. It participates in cell wall biogenesis; teichuronic acid biosynthesis. Might be involved in the polymerization of teichuronic acid repeating units after their translocation to the outer surface of the membrane. This is Teichuronic acid biosynthesis protein TuaE (tuaE) from Bacillus subtilis (strain 168).